The following is a 231-amino-acid chain: MKFGISQSFPCSYLPDEQETLLVYAEETEHNTYYEMLMAAGFRRSGAQVYRPHCGACTACQAIRVPVADFAPSKGQKRILKRNSDITVVLSEQDKAHYYSLYEKYINTRHQDGSMYPATPEQYASFAHGDWLDPLYIELHLSGELVGIAVTDALENALSAVYTFFEPSLAERSLGTFAVLQQISIAKRLNKQHLYLGYQIDNCQKMQYKRNFLPHERFIEQKWQLISKKDW.

It belongs to the R-transferase family. Bpt subfamily.

It is found in the cytoplasm. The enzyme catalyses N-terminal L-glutamyl-[protein] + L-leucyl-tRNA(Leu) = N-terminal L-leucyl-L-glutamyl-[protein] + tRNA(Leu) + H(+). The catalysed reaction is N-terminal L-aspartyl-[protein] + L-leucyl-tRNA(Leu) = N-terminal L-leucyl-L-aspartyl-[protein] + tRNA(Leu) + H(+). Functionally, functions in the N-end rule pathway of protein degradation where it conjugates Leu from its aminoacyl-tRNA to the N-termini of proteins containing an N-terminal aspartate or glutamate. This Pseudoalteromonas atlantica (strain T6c / ATCC BAA-1087) protein is Aspartate/glutamate leucyltransferase.